The following is a 173-amino-acid chain: MDLVVGRVAKAHGVTGELTVEVRTDDPQGRFVRGAVLRGRPPRGGAEREYVIESVRTHGDRLLVRFDGVADRDAADALRGTVFLVDSADLPPIEDPDEFYDHQLEGLTVITTSGGEVGKVAEVLHTAAGELLAVRTADDTEVLVPFVSAIVLSVSLDDQLITIDPPDGLLELD.

The 74-residue stretch at 96-169 (PDEFYDHQLE…LITIDPPDGL (74 aa)) folds into the PRC barrel domain.

This sequence belongs to the RimM family. Binds ribosomal protein uS19.

It is found in the cytoplasm. Its function is as follows. An accessory protein needed during the final step in the assembly of 30S ribosomal subunit, possibly for assembly of the head region. Essential for efficient processing of 16S rRNA. May be needed both before and after RbfA during the maturation of 16S rRNA. It has affinity for free ribosomal 30S subunits but not for 70S ribosomes. The chain is Ribosome maturation factor RimM from Mycolicibacterium gilvum (strain PYR-GCK) (Mycobacterium gilvum (strain PYR-GCK)).